A 335-amino-acid chain; its full sequence is Probable nicotianamine synthase 2 (335 aa).

This sequence belongs to the nicotianamine synthase (NAS)-like family.

It carries out the reaction 3 S-adenosyl-L-methionine = nicotianamine + 3 S-methyl-5'-thioadenosine + 3 H(+). Functionally, synthesizes nicotianamine, a polyamine that is the first intermediate in the synthesis of the phytosiderophores of the mugineic acid type found in gramineae which serves as a sensor for the physiological iron status within the plant, and/or might be involved in the transport of iron. In Hordeum vulgare (Barley), this protein is Probable nicotianamine synthase 2 (NAS2).